The sequence spans 418 residues: Actin-related protein 3 (418 aa).

A2 is subject to N-acetylalanine.

Belongs to the actin family. ARP3 subfamily. Component of the Arp2/3 complex composed of ACTR2/ARP2, ACTR3/ARP3, ARPC1B/p41-ARC, ARPC2/p34-ARC, ARPC3/p21-ARC, ARPC4/p20-ARC and ARPC5/p16-ARC. Detected in fibroblasts.

Its subcellular location is the cytoplasm. The protein resides in the cytoskeleton. The protein localises to the cell projection. It localises to the nucleus. In terms of biological role, ATP-binding component of the Arp2/3 complex, a multiprotein complex that mediates actin polymerization upon stimulation by nucleation-promoting factor (NPF). The Arp2/3 complex mediates the formation of branched actin networks in the cytoplasm, providing the force for cell motility. Seems to contact the pointed end of the daughter actin filament. In addition to its role in the cytoplasmic cytoskeleton, the Arp2/3 complex also promotes actin polymerization in the nucleus, thereby regulating gene transcription and repair of damaged DNA. The Arp2/3 complex promotes homologous recombination (HR) repair in response to DNA damage by promoting nuclear actin polymerization, leading to drive motility of double-strand breaks (DSBs). This chain is Actin-related protein 3 (ACTR3), found in Gallus gallus (Chicken).